We begin with the raw amino-acid sequence, 1091 residues long: ATP-citrate synthase (1091 aa).

The ATP-grasp domain maps to 4-265 (KAISEQTGKE…LDAKSGASLK (262 aa)). Positions 58, 66, 67, 109, 111, and 118 each coordinate ATP. Tyr-131 bears the Phosphotyrosine mark. ATP is bound at residue Asp-216. Asp-257, Ser-260, and Ala-262 together coordinate Mg(2+). Phosphoserine is present on Ser-263. Gly-309, Asn-346, Thr-348, Tyr-364, and Arg-379 together coordinate citrate. Residues 442–457 (SGSTSTPAPSRTASFS) are compositionally biased toward low complexity. The segment at 442-478 (SGSTSTPAPSRTASFSESRADEVAPAKKAKPAMPQGK) is disordered. A Phosphothreonine modification is found at Thr-447. Ser-451 bears the Phosphoserine mark. At Ser-455 the chain carries Phosphoserine; by PKA and PKB/AKT1 or PKB/AKT2 or BCKDK. Ser-459 bears the Phosphoserine mark. N6-acetyllysine; alternate is present on residues Lys-530, Lys-536, and Lys-544. Glycyl lysine isopeptide (Lys-Gly) (interchain with G-Cter in ubiquitin); alternate cross-links involve residues Lys-530, Lys-536, and Lys-544. A Phosphothreonine modification is found at Thr-629. Ser-653 carries the phosphoserine modification. Tyr-672 carries the phosphotyrosine modification. His-750 (tele-phosphohistidine intermediate) is an active-site residue. 769 to 779 (LKEAGVFVPRS) provides a ligand contact to CoA. Ser-829 carries the post-translational modification Phosphoserine. N6-acetyllysine occurs at positions 938, 958, 968, and 1067. Ser-1090 is modified (phosphoserine).

The protein in the N-terminal section; belongs to the succinate/malate CoA ligase beta subunit family. In the C-terminal section; belongs to the succinate/malate CoA ligase alpha subunit family. In terms of assembly, homotetramer. Mg(2+) is required as a cofactor. Phosphorylated by PKA and GSK3 in a sequential manner; phosphorylation results in activation of its activity. Phosphorylation on Thr-447 and Ser-451 depends on the phosphorylation state of Ser-455. Phosphorylation on Ser-455 is decreased by prior phosphorylation on the other 2 residues. Phosphorylated at Ser-455 by BCKDK and dephosphorylated by protein phosphatase PPM1K. In terms of processing, ISGylated. Post-translationally, acetylated at Lys-530, Lys-536 and Lys-544 by KAT2B/PCAF. Acetylation is promoted by glucose and stabilizes the protein, probably by preventing ubiquitination at the same sites. Acetylation promotes de novo lipid synthesis. Deacetylated by SIRT2. Ubiquitinated at Lys-530, Lys-536 and Lys-544 by the BCR(KLHL25) E3 ubiquitin ligase complex and UBR4, leading to its degradation. Ubiquitination is probably inhibited by acetylation at same site. BCR(KLHL25)-mediated degradation of ACLY promotes fatty acid oxidation and is required for differentiation of inducible regulatory T (iTreg) cells.

Its subcellular location is the cytoplasm. The protein resides in the cytosol. It carries out the reaction oxaloacetate + acetyl-CoA + ADP + phosphate = citrate + ATP + CoA. With respect to regulation, phosphorylation results in activation of its activity. Glucose 6-phosphate, fructose 6-phosphate, fructose 2,6-bisphosphate, ribulose 5-phosphate, and fructose 1,6-bisphosphate also act as activators. Its function is as follows. Catalyzes the cleavage of citrate into oxaloacetate and acetyl-CoA, the latter serving as common substrate in multiple biochemical reactions in protein, carbohydrate and lipid metabolism. This Mus musculus (Mouse) protein is ATP-citrate synthase (Acly).